Consider the following 491-residue polypeptide: UDP-N-acetylmuramate--L-alanine ligase (491 aa).

126–132 provides a ligand contact to ATP; the sequence is GTHGKTT.

Belongs to the MurCDEF family.

Its subcellular location is the cytoplasm. It carries out the reaction UDP-N-acetyl-alpha-D-muramate + L-alanine + ATP = UDP-N-acetyl-alpha-D-muramoyl-L-alanine + ADP + phosphate + H(+). It participates in cell wall biogenesis; peptidoglycan biosynthesis. Functionally, cell wall formation. The protein is UDP-N-acetylmuramate--L-alanine ligase of Escherichia coli (strain SMS-3-5 / SECEC).